The sequence spans 325 residues: Dimethylsulfide dehydrogenase subunit beta (325 aa).

4Fe-4S ferredoxin-type domains follow at residues isoleucine 6–arginine 35, serine 123–glutamate 154, and glycine 156–glutamine 185. Cysteine 15, cysteine 18, cysteine 21, cysteine 25, cysteine 132, cysteine 135, and cysteine 140 together coordinate [4Fe-4S] cluster. [3Fe-4S] cluster contacts are provided by cysteine 144, cysteine 165, and cysteine 171. [4Fe-4S] cluster contacts are provided by cysteine 175, cysteine 192, cysteine 195, cysteine 207, and cysteine 211.

In terms of assembly, heterotrimer of alpha, beta and gamma subunits. [3Fe-4S] cluster is required as a cofactor. It depends on [4Fe-4S] cluster as a cofactor.

The protein localises to the periplasm. In terms of biological role, electron transfer subunit of the dehydrogenase during anaerobic growth on dimethyl sulfide. The protein is Dimethylsulfide dehydrogenase subunit beta (ddhB) of Rhodovulum sulfidophilum (Rhodobacter sulfidophilus).